The primary structure comprises 173 residues: Crossover junction endodeoxyribonuclease RuvC (173 aa).

Residues Asp-8, Glu-67, and Asp-139 contribute to the active site. Mg(2+)-binding residues include Asp-8, Glu-67, and Asp-139.

It belongs to the RuvC family. Homodimer which binds Holliday junction (HJ) DNA. The HJ becomes 2-fold symmetrical on binding to RuvC with unstacked arms; it has a different conformation from HJ DNA in complex with RuvA. In the full resolvosome a probable DNA-RuvA(4)-RuvB(12)-RuvC(2) complex forms which resolves the HJ. The cofactor is Mg(2+).

Its subcellular location is the cytoplasm. The catalysed reaction is Endonucleolytic cleavage at a junction such as a reciprocal single-stranded crossover between two homologous DNA duplexes (Holliday junction).. In terms of biological role, the RuvA-RuvB-RuvC complex processes Holliday junction (HJ) DNA during genetic recombination and DNA repair. Endonuclease that resolves HJ intermediates. Cleaves cruciform DNA by making single-stranded nicks across the HJ at symmetrical positions within the homologous arms, yielding a 5'-phosphate and a 3'-hydroxyl group; requires a central core of homology in the junction. The consensus cleavage sequence is 5'-(A/T)TT(C/G)-3'. Cleavage occurs on the 3'-side of the TT dinucleotide at the point of strand exchange. HJ branch migration catalyzed by RuvA-RuvB allows RuvC to scan DNA until it finds its consensus sequence, where it cleaves and resolves the cruciform DNA. The polypeptide is Crossover junction endodeoxyribonuclease RuvC (Salmonella arizonae (strain ATCC BAA-731 / CDC346-86 / RSK2980)).